We begin with the raw amino-acid sequence, 435 residues long: MFDIKAIRDDAGAFDAGLAKRGLAPQAARLIEIDERRRAIITSLQELQQRRNDASKQIGQAKAKKDDALAQSLMEEVASIKSAIQEGEEKERAANAEIEAALASIPNIPFDDVPVGPDESANVIRHSHGKAREMNFAPKEHFDLGEALGLMDFEAAAKMSGARFTVLKGQLARLERAIGNFMVDLHTTEFGYEEVAPPLMVRDDAMFGTAQLPKFEDDQFATFKGLARDDQEKYWLIPTAEVPLTNLVRESILSEEELPKRFTAYTACFRAEAGSAGRDTRGMIRQHQFSKVELVSITTPEKSREEHERMLSCAEEVLKRLDLHYRVMTLSTGDMGFASRKTYDIEVWLPGQNAFREISSCSVCGDFQARRMNARYRPKGEKNTRFVHTLNGSGLAVGRALVAVMENYQQADGSITVPTALQPYMGGQEVIAVHG.

239–241 (TAE) contributes to the L-serine binding site. 270–272 (RAE) lines the ATP pocket. E293 contributes to the L-serine binding site. 357-360 (EISS) contributes to the ATP binding site. Residue S393 participates in L-serine binding.

This sequence belongs to the class-II aminoacyl-tRNA synthetase family. Type-1 seryl-tRNA synthetase subfamily. Homodimer. The tRNA molecule binds across the dimer.

The protein resides in the cytoplasm. The catalysed reaction is tRNA(Ser) + L-serine + ATP = L-seryl-tRNA(Ser) + AMP + diphosphate + H(+). The enzyme catalyses tRNA(Sec) + L-serine + ATP = L-seryl-tRNA(Sec) + AMP + diphosphate + H(+). Its pathway is aminoacyl-tRNA biosynthesis; selenocysteinyl-tRNA(Sec) biosynthesis; L-seryl-tRNA(Sec) from L-serine and tRNA(Sec): step 1/1. In terms of biological role, catalyzes the attachment of serine to tRNA(Ser). Is also able to aminoacylate tRNA(Sec) with serine, to form the misacylated tRNA L-seryl-tRNA(Sec), which will be further converted into selenocysteinyl-tRNA(Sec). The sequence is that of Serine--tRNA ligase from Parvibaculum lavamentivorans (strain DS-1 / DSM 13023 / NCIMB 13966).